Consider the following 391-residue polypeptide: 1-deoxy-D-xylulose 5-phosphate reductoisomerase (391 aa).

Residues Thr10, Gly11, Ser12, Ile13, Asn38, and Asn122 each coordinate NADPH. Lys123 lines the 1-deoxy-D-xylulose 5-phosphate pocket. Glu124 is an NADPH binding site. Asp148 contacts Mn(2+). 1-deoxy-D-xylulose 5-phosphate contacts are provided by Ser149, Glu150, Ser173, and His196. Mn(2+) is bound at residue Glu150. Gly202 contacts NADPH. 1-deoxy-D-xylulose 5-phosphate is bound by residues Ser209, Asn214, Lys215, and Glu218. Mn(2+) is bound at residue Glu218.

The protein belongs to the DXR family. The cofactor is Mg(2+). It depends on Mn(2+) as a cofactor.

The catalysed reaction is 2-C-methyl-D-erythritol 4-phosphate + NADP(+) = 1-deoxy-D-xylulose 5-phosphate + NADPH + H(+). It participates in isoprenoid biosynthesis; isopentenyl diphosphate biosynthesis via DXP pathway; isopentenyl diphosphate from 1-deoxy-D-xylulose 5-phosphate: step 1/6. Its function is as follows. Catalyzes the NADPH-dependent rearrangement and reduction of 1-deoxy-D-xylulose-5-phosphate (DXP) to 2-C-methyl-D-erythritol 4-phosphate (MEP). The protein is 1-deoxy-D-xylulose 5-phosphate reductoisomerase of Wolbachia pipientis subsp. Culex pipiens (strain wPip).